Reading from the N-terminus, the 594-residue chain is Proteasome-associated ATPase (594 aa).

The span at Met1–Thr12 shows a compositional bias: polar residues. Positions Met1 to Tyr20 are disordered. The stretch at Arg18–Lys71 forms a coiled coil. Residue Gly282–Leu287 participates in ATP binding. The interval Tyr593–Leu594 is docks into pockets in the proteasome alpha-ring.

Belongs to the AAA ATPase family. Homohexamer. Assembles into a hexameric ring structure that caps the 20S proteasome core. Strongly interacts with the prokaryotic ubiquitin-like protein Pup through a hydrophobic interface; the interacting region of ARC lies in its N-terminal coiled-coil domain. There is one Pup binding site per ARC hexamer ring. Upon ATP-binding, the C-terminus of ARC interacts with the alpha-rings of the proteasome core, possibly by binding to the intersubunit pockets.

The protein operates within protein degradation; proteasomal Pup-dependent pathway. In terms of biological role, ATPase which is responsible for recognizing, binding, unfolding and translocation of pupylated proteins into the bacterial 20S proteasome core particle. May be essential for opening the gate of the 20S proteasome via an interaction with its C-terminus, thereby allowing substrate entry and access to the site of proteolysis. Thus, the C-termini of the proteasomal ATPase may function like a 'key in a lock' to induce gate opening and therefore regulate proteolysis. This Renibacterium salmoninarum (strain ATCC 33209 / DSM 20767 / JCM 11484 / NBRC 15589 / NCIMB 2235) protein is Proteasome-associated ATPase.